A 121-amino-acid chain; its full sequence is Ribosome-binding factor A (121 aa).

Belongs to the RbfA family. In terms of assembly, monomer. Binds 30S ribosomal subunits, but not 50S ribosomal subunits or 70S ribosomes.

The protein localises to the cytoplasm. One of several proteins that assist in the late maturation steps of the functional core of the 30S ribosomal subunit. Associates with free 30S ribosomal subunits (but not with 30S subunits that are part of 70S ribosomes or polysomes). Required for efficient processing of 16S rRNA. May interact with the 5'-terminal helix region of 16S rRNA. The chain is Ribosome-binding factor A from Clostridium tetani (strain Massachusetts / E88).